Consider the following 580-residue polypeptide: Frizzled and smoothened-like protein K (580 aa).

The N-terminal stretch at 1 to 18 is a signal peptide; sequence MRVLFILFLFYFYTYTEA. The Extracellular segment spans residues 19 to 236; the sequence is QQYYPIDPTG…QWDNIFDTSD (218 aa). In terms of domain architecture, FZ spans 25 to 154; sequence DPTGKCEQYI…SSDYNLTTYG (130 aa). Residues asparagine 52, asparagine 97, asparagine 149, asparagine 170, and asparagine 186 are each glycosylated (N-linked (GlcNAc...) asparagine). The chain crosses the membrane as a helical span at residues 237–257; it reads AISLVSLLCSVYLFITYMVIN. The Cytoplasmic portion of the chain corresponds to 258–264; that stretch reads PKRNKYD. A helical transmembrane segment spans residues 265–285; it reads YFFSFFVLSIILMSIAGTIGF. At 286-308 the chain is on the extracellular side; it reads SVGGTRKLLCPEINRRGVYTDPA. Residues 309 to 329 traverse the membrane as a helical segment; it reads VAAAGWIFQFAIINAILWFSI. The Cytoplasmic portion of the chain corresponds to 330–349; sequence NSFELWFQIKFIKRKLHLIK. A helical transmembrane segment spans residues 350 to 370; sequence FYILAVLVISIALSVPLSAIG. Topologically, residues 371–391 are extracellular; sequence EFNAGLGNFVVWIESGKYQNW. Residues 392-412 traverse the membrane as a helical segment; that stretch reads FFWGPLGIVLTVGTTFIGLVI. Topologically, residues 413-434 are cytoplasmic; it reads WEIYKIVSSTNKSDFFKLQLKP. The chain crosses the membrane as a helical span at residues 435 to 455; the sequence is LMNMLLIYLTFVYLFGYNFYI. Topologically, residues 456-490 are extracellular; the sequence is HNSLNGFYGSSEEFKNCIISTDGKDCRIQGPPYSS. A helical membrane pass occupies residues 491-511; sequence ILMFVFCLRIYGVYCIALYGF. The Cytoplasmic segment spans residues 512–580; the sequence is SPKTRSIWSN…SMEPDEIILR (69 aa). Residues 514 to 519 carry the Lys-Thr-X-X-X-Trp motif, mediates interaction with the PDZ domain of Dvl family members motif; the sequence is KTRSIW. The tract at residues 542–580 is disordered; that stretch reads TTKGGTSSTDIKMSTNNNSNMDSGGGKSSSMEPDEIILR. Polar residues predominate over residues 551 to 563; it reads DIKMSTNNNSNMD.

It belongs to the G-protein coupled receptor Fz/Smo family.

It is found in the membrane. The chain is Frizzled and smoothened-like protein K (fslK) from Dictyostelium discoideum (Social amoeba).